The primary structure comprises 610 residues: Propanediol dehydratase-reactivating factor large subunit (610 aa).

11–13 provides a ligand contact to ATP; it reads NSS. Mg(2+)-binding residues include T105, D166, and D183. Residues 459–462, 557–558, and R591 each bind ATP; these read EEIK and GS.

This sequence belongs to the DdrA/PduG family. As to quaternary structure, forms a heterotetramer PduG(2)/PduH(2). It depends on Mg(2+) as a cofactor.

Its subcellular location is the bacterial microcompartment. It catalyses the reaction ATP + H2O = ADP + phosphate + H(+). It participates in polyol metabolism; 1,2-propanediol degradation. Large subunit of the propanediol dehydratase-reactivating factor (DDR), which reactivates suicidally inhibited adenosylcobalamin-dependent propanediol dehydratase (diol dehydratase, DDH) found in the bacterial microcompartment (BMC) dedicated to 1,2-propanediol (1,2-PD) degradation. Reactivates inactivated DDH in the presence of ATP, Mg(2+) and free adenosylcobalamin (AdoCbl), by mediating the exchange of the tightly bound damaged cofactor AdoCbl for a free intact one. This subunit contains the adenosine nucleotide binding site. Its function is as follows. Expression of a cosmid containing the full 21-gene pdu operon in E.coli allows E.coli to grow on 1,2-propanediol (1,2-PD) with the appearance of bacterial microcompartments (BMC) in its cytoplasm. Functionally, the 1,2-PD-specific bacterial microcompartment (BMC) concentrates low levels of 1,2-PD catabolic enzymes, concentrates volatile reaction intermediates thus enhancing pathway flux and keeps the level of toxic, mutagenic propionaldehyde low. The polypeptide is Propanediol dehydratase-reactivating factor large subunit (Citrobacter freundii).